The chain runs to 179 residues: Acireductone dioxygenase (179 aa).

Residues His88, His90, Glu94, and His133 each coordinate Fe(2+). Ni(2+) contacts are provided by His88, His90, Glu94, and His133.

It belongs to the acireductone dioxygenase (ARD) family. Monomer. Interacts with MMP14. Fe(2+) is required as a cofactor. Ni(2+) serves as cofactor.

It localises to the cytoplasm. Its subcellular location is the nucleus. The protein resides in the cell membrane. It catalyses the reaction 1,2-dihydroxy-5-(methylsulfanyl)pent-1-en-3-one + O2 = 4-methylsulfanyl-2-oxobutanoate + formate + 2 H(+). It carries out the reaction 1,2-dihydroxy-5-(methylsulfanyl)pent-1-en-3-one + O2 = 3-(methylsulfanyl)propanoate + CO + formate + 2 H(+). Its pathway is amino-acid biosynthesis; L-methionine biosynthesis via salvage pathway; L-methionine from S-methyl-5-thio-alpha-D-ribose 1-phosphate: step 5/6. Functionally, catalyzes 2 different reactions between oxygen and the acireductone 1,2-dihydroxy-3-keto-5-methylthiopentene (DHK-MTPene) depending upon the metal bound in the active site. Fe-containing acireductone dioxygenase (Fe-ARD) produces formate and 2-keto-4-methylthiobutyrate (KMTB), the alpha-ketoacid precursor of methionine in the methionine recycle pathway. Ni-containing acireductone dioxygenase (Ni-ARD) produces methylthiopropionate, carbon monoxide and formate, and does not lie on the methionine recycle pathway. Also down-regulates cell migration mediated by MMP14. The polypeptide is Acireductone dioxygenase (Macaca mulatta (Rhesus macaque)).